Reading from the N-terminus, the 346-residue chain is Very-long-chain 3-oxoacyl-CoA reductase (346 aa).

Residues 19–39 traverse the membrane as a helical segment; that stretch reads LIYGVLFVGVYKITTFTLSVG. Residues V65, D119, N146, Y220, K224, V253, and S255 each contribute to the NADP(+) site. The Proton donor role is filled by Y220. Catalysis depends on K224, which acts as the Lowers pKa of active site Tyr.

It belongs to the short-chain dehydrogenases/reductases (SDR) family.

The protein localises to the endoplasmic reticulum membrane. The catalysed reaction is a very-long-chain (3R)-3-hydroxyacyl-CoA + NADP(+) = a very-long-chain 3-oxoacyl-CoA + NADPH + H(+). It functions in the pathway lipid metabolism; fatty acid biosynthesis. Functionally, component of the microsomal membrane bound fatty acid elongation system, which produces the 26-carbon very long-chain fatty acids (VLCFA) from palmitate. Catalyzes the reduction of the 3-ketoacyl-CoA intermediate that is formed in each cycle of fatty acid elongation. VLCFAs serve as precursors for ceramide and sphingolipids. This is Very-long-chain 3-oxoacyl-CoA reductase from Debaryomyces hansenii (strain ATCC 36239 / CBS 767 / BCRC 21394 / JCM 1990 / NBRC 0083 / IGC 2968) (Yeast).